Consider the following 337-residue polypeptide: RNA 3'-terminal phosphate cyclase (337 aa).

ATP contacts are provided by residues glutamine 101 and 282-285 (HMSD). Catalysis depends on histidine 306, which acts as the Tele-AMP-histidine intermediate.

The protein belongs to the RNA 3'-terminal cyclase family. Type 1 subfamily.

It localises to the cytoplasm. It catalyses the reaction a 3'-end 3'-phospho-ribonucleotide-RNA + ATP = a 3'-end 2',3'-cyclophospho-ribonucleotide-RNA + AMP + diphosphate. Its function is as follows. Catalyzes the conversion of 3'-phosphate to a 2',3'-cyclic phosphodiester at the end of RNA. The mechanism of action of the enzyme occurs in 3 steps: (A) adenylation of the enzyme by ATP; (B) transfer of adenylate to an RNA-N3'P to produce RNA-N3'PP5'A; (C) and attack of the adjacent 2'-hydroxyl on the 3'-phosphorus in the diester linkage to produce the cyclic end product. The biological role of this enzyme is unknown but it is likely to function in some aspects of cellular RNA processing. The sequence is that of RNA 3'-terminal phosphate cyclase from Saccharolobus islandicus (strain L.S.2.15 / Lassen #1) (Sulfolobus islandicus).